Consider the following 637-residue polypeptide: Delta(14)-sterol reductase LBR (637 aa).

Positions 1-62 (MPNRKYADGE…DIRLQSSFKQ (62 aa)) constitute a Tudor domain. The Nuclear portion of the chain corresponds to 1-205 (MPNRKYADGE…KTKELEFGGR (205 aa)). The segment covering 57-73 (QSSFKQRKSQSSSSSPS) has biased composition (low complexity). The interval 57–151 (QSSFKQRKSQ…SKLLEQQKLK (95 aa)) is disordered. Basic residues predominate over residues 74–97 (RRSRSRSRSRSPGRPAKGRRRSSS). Residues Ser-95 and Ser-96 each carry the phosphoserine; by PKA modification. 2 stretches are compositionally biased toward basic and acidic residues: residues 98–110 (HSRE…KKII) and 124–151 (NTRR…QKLK). 8 helical membrane-spanning segments follow: residues 206–226 (FGTF…VLMC), 250–270 (VFGV…LPIG), 288–309 (INGF…YFQF), 317–338 (HFVQ…YLYI), 378–399 (YFCE…MLLA), 403–425 (IHNQ…LYVV), 466–486 (FYLV…ITIL), and 554–574 (PCGF…CLLV).

The protein belongs to the ERG4/ERG24 family. Interacts with DNA. Interaction with DNA is sequence independent with higher affinity for supercoiled and relaxed circular DNA than linear DNA.

It is found in the nucleus inner membrane. The protein localises to the nucleus. Its subcellular location is the cytoplasm. It localises to the endoplasmic reticulum membrane. The catalysed reaction is 5alpha-cholest-8,14-dien-3beta-ol + NADPH + H(+) = 5alpha-cholest-8-en-3beta-ol + NADP(+). It catalyses the reaction 4,4-dimethyl-5alpha-cholesta-8,24-dien-3beta-ol + NADP(+) = 4,4-dimethyl-5alpha-cholesta-8,14,24-trien-3beta-ol + NADPH + H(+). It carries out the reaction 4,4-dimethyl-8,14-cholestadien-3beta-ol + NADPH + H(+) = 4,4-dimethyl-5alpha-cholest-8-en-3beta-ol + NADP(+). The protein operates within steroid biosynthesis; cholesterol biosynthesis. Catalyzes the reduction of the C14-unsaturated bond of lanosterol, as part of the metabolic pathway leading to cholesterol biosynthesis. Anchors the lamina and the heterochromatin to the inner nuclear membrane. The protein is Delta(14)-sterol reductase LBR (LBR) of Gallus gallus (Chicken).